A 433-amino-acid chain; its full sequence is Glucose-6-phosphate isomerase (433 aa).

Residue glutamate 285 is the Proton donor of the active site. Catalysis depends on residues histidine 306 and lysine 421.

The protein belongs to the GPI family.

It is found in the cytoplasm. It catalyses the reaction alpha-D-glucose 6-phosphate = beta-D-fructose 6-phosphate. Its pathway is carbohydrate biosynthesis; gluconeogenesis. The protein operates within carbohydrate degradation; glycolysis; D-glyceraldehyde 3-phosphate and glycerone phosphate from D-glucose: step 2/4. Functionally, catalyzes the reversible isomerization of glucose-6-phosphate to fructose-6-phosphate. This Mycoplasma mobile (strain ATCC 43663 / 163K / NCTC 11711) (Mesomycoplasma mobile) protein is Glucose-6-phosphate isomerase.